A 341-amino-acid polypeptide reads, in one-letter code: Hydrogenase expression/formation protein HupE (341 aa).

The protein belongs to the HypE family.

Functionally, may be involved in the maturation of the NifE hydrogenase. In Azotobacter chroococcum mcd 1, this protein is Hydrogenase expression/formation protein HupE (hupE).